Consider the following 547-residue polypeptide: Oncoprotein-induced transcript 3 protein (547 aa).

Positions 1–19 are cleaved as a signal peptide; the sequence is MPQLLLLACLLIIVTRVAP. Residues Asn-89 and Asn-116 are each glycosylated (N-linked (GlcNAc...) asparagine). The region spanning 182 to 222 is the EGF-like; calcium-binding domain; that stretch reads DENECEQNNGGCSEICVNLKNSYRCECGIGRVLRSDGKTCE. 3 disulfides stabilise this stretch: Cys-186–Cys-197, Cys-193–Cys-206, and Cys-208–Cys-221. The ZP domain occupies 267–516; the sequence is FCKSNTIEVS…SRCAQGCHRR (250 aa). The N-linked (GlcNAc...) asparagine glycan is linked to Asn-299. The segment at 520–547 is disordered; the sequence is EASTEGEDASGPRSQMLTGGPISIDWED.

It is found in the nucleus envelope. Its function is as follows. May be involved in hepatocellular function and development. In Bos taurus (Bovine), this protein is Oncoprotein-induced transcript 3 protein (OIT3).